The chain runs to 329 residues: Phenylalanine--tRNA ligase alpha subunit (329 aa).

Residue Glu-253 participates in Mg(2+) binding.

It belongs to the class-II aminoacyl-tRNA synthetase family. Phe-tRNA synthetase alpha subunit type 1 subfamily. Tetramer of two alpha and two beta subunits. It depends on Mg(2+) as a cofactor.

The protein localises to the cytoplasm. It catalyses the reaction tRNA(Phe) + L-phenylalanine + ATP = L-phenylalanyl-tRNA(Phe) + AMP + diphosphate + H(+). The chain is Phenylalanine--tRNA ligase alpha subunit from Coxiella burnetii (strain CbuK_Q154) (Coxiella burnetii (strain Q154)).